The sequence spans 267 residues: 2-oxoglutarate synthase subunit KorB (267 aa).

As to quaternary structure, heterotetramer of the KorA, KorB, KorC and KorD subunits.

It catalyses the reaction 2 oxidized [2Fe-2S]-[ferredoxin] + 2-oxoglutarate + CoA = succinyl-CoA + 2 reduced [2Fe-2S]-[ferredoxin] + CO2 + H(+). The sequence is that of 2-oxoglutarate synthase subunit KorB (korB) from Archaeoglobus fulgidus (strain ATCC 49558 / DSM 4304 / JCM 9628 / NBRC 100126 / VC-16).